A 403-amino-acid chain; its full sequence is Argininosuccinate synthase (403 aa).

Residue alanine 10 to serine 18 coordinates ATP. Position 89 (tyrosine 89) interacts with L-citrulline. Residue glycine 119 participates in ATP binding. Residues threonine 121, asparagine 125, and aspartate 126 each contribute to the L-aspartate site. Residue asparagine 125 coordinates L-citrulline. Positions 129, 177, 186, 262, and 274 each coordinate L-citrulline.

This sequence belongs to the argininosuccinate synthase family. Type 1 subfamily. Homotetramer.

Its subcellular location is the cytoplasm. It catalyses the reaction L-citrulline + L-aspartate + ATP = 2-(N(omega)-L-arginino)succinate + AMP + diphosphate + H(+). The protein operates within amino-acid biosynthesis; L-arginine biosynthesis; L-arginine from L-ornithine and carbamoyl phosphate: step 2/3. This is Argininosuccinate synthase from Synechococcus sp. (strain JA-3-3Ab) (Cyanobacteria bacterium Yellowstone A-Prime).